Here is a 1297-residue protein sequence, read N- to C-terminus: Insulin receptor-related protein (1297 aa).

The first 26 residues, Met1–Thr26, serve as a signal peptide directing secretion. N-linked (GlcNAc...) asparagine glycosylation is present at Asn47. Intrachain disulfides connect Cys214–Cys222, Cys216–Cys228, Cys229–Cys237, Cys233–Cys246, Cys249–Cys258, Cys262–Cys274, Cys280–Cys300, Cys304–Cys317, and Cys320–Cys324. N-linked (GlcNAc...) asparagine glycosylation occurs at Asn311. 5 N-linked (GlcNAc...) asparagine glycosylation sites follow: Asn411, Asn492, Asn528, Asn616, and Asn634. 2 Fibronectin type-III domains span residues Gln483–Ala603 and Val607–Ala707. Cys657 and Cys864 are joined by a disulfide. 2 disordered regions span residues Ser666–Cys687 and Ser732–Ser758. Acidic residues predominate over residues Glu675 to Ser685. The Extracellular portion of the chain corresponds to Ala747–His921. 3 N-linked (GlcNAc...) asparagine glycosylation sites follow: Asn756, Asn885, and Asn898. The 96-residue stretch at Ile818–Glu913 folds into the Fibronectin type-III 3 domain. A helical membrane pass occupies residues Val922–Phe943. Residues Tyr944–His1297 are Cytoplasmic-facing. One can recognise a Protein kinase domain in the interval Ile979–Phe1254. ATP-binding positions include Leu985–Val993 and Lys1013. Catalysis depends on Asp1115, which acts as the Proton acceptor. Tyr1145 and Tyr1146 each carry phosphotyrosine; by autocatalysis. Residues Gly1267–His1297 form a disordered region. Positions Ser1281–His1297 are enriched in polar residues.

This sequence belongs to the protein kinase superfamily. Tyr protein kinase family. Insulin receptor subfamily. As to quaternary structure, probable tetramer of 2 alpha and 2 beta chains linked by disulfide bonds. The alpha chains contribute to the formation of the ligand-binding domain, while the beta chains carry the kinase domain. Autophosphorylated on tyrosine residues between pH 7.9 and pH 10.5.

The protein resides in the membrane. It catalyses the reaction L-tyrosyl-[protein] + ATP = O-phospho-L-tyrosyl-[protein] + ADP + H(+). Its function is as follows. Receptor with tyrosine-protein kinase activity. Functions as a pH sensing receptor which is activated by increased extracellular pH. Activates an intracellular signaling pathway that involves IRS1 and AKT1/PKB. The polypeptide is Insulin receptor-related protein (INSRR) (Homo sapiens (Human)).